The sequence spans 360 residues: Carbamoyl phosphate synthase small chain (360 aa).

Residues 1-169 (MTKRLLILED…TKTAYPAPGI (169 aa)) form a CPSase region. L-glutamine contacts are provided by Ser-46, Gly-220, and Gly-222. The Glutamine amidotransferase type-1 domain maps to 172-358 (NIVLVDFGLK…LEMIDSWRCT (187 aa)). The active-site Nucleophile is Cys-247. Residues Met-248, Gln-251, Asn-289, Gly-291, and Tyr-292 each coordinate L-glutamine. Active-site residues include His-331 and Asp-333.

Belongs to the CarA family. As to quaternary structure, composed of two chains; the small (or glutamine) chain promotes the hydrolysis of glutamine to ammonia, which is used by the large (or ammonia) chain to synthesize carbamoyl phosphate. Tetramer of heterodimers (alpha,beta)4.

It carries out the reaction hydrogencarbonate + L-glutamine + 2 ATP + H2O = carbamoyl phosphate + L-glutamate + 2 ADP + phosphate + 2 H(+). The enzyme catalyses L-glutamine + H2O = L-glutamate + NH4(+). The protein operates within amino-acid biosynthesis; L-arginine biosynthesis; carbamoyl phosphate from bicarbonate: step 1/1. Its pathway is pyrimidine metabolism; UMP biosynthesis via de novo pathway; (S)-dihydroorotate from bicarbonate: step 1/3. Small subunit of the glutamine-dependent carbamoyl phosphate synthetase (CPSase). CPSase catalyzes the formation of carbamoyl phosphate from the ammonia moiety of glutamine, carbonate, and phosphate donated by ATP, constituting the first step of 2 biosynthetic pathways, one leading to arginine and/or urea and the other to pyrimidine nucleotides. The small subunit (glutamine amidotransferase) binds and cleaves glutamine to supply the large subunit with the substrate ammonia. The chain is Carbamoyl phosphate synthase small chain from Streptococcus pyogenes serotype M18 (strain MGAS8232).